Reading from the N-terminus, the 593-residue chain is Aspartate--tRNA(Asp/Asn) ligase (593 aa).

Glu172 contacts L-aspartate. The tract at residues 196–199 (QLFK) is aspartate. Arg218 lines the L-aspartate pocket. ATP is bound by residues 218-220 (RDE) and Gln227. His450 serves as a coordination point for L-aspartate. An ATP-binding site is contributed by Glu484. Arg491 contacts L-aspartate. ATP is bound at residue 536 to 539 (GLDR).

This sequence belongs to the class-II aminoacyl-tRNA synthetase family. Type 1 subfamily. In terms of assembly, homodimer.

The protein localises to the cytoplasm. The catalysed reaction is tRNA(Asx) + L-aspartate + ATP = L-aspartyl-tRNA(Asx) + AMP + diphosphate. Functionally, aspartyl-tRNA synthetase with relaxed tRNA specificity since it is able to aspartylate not only its cognate tRNA(Asp) but also tRNA(Asn). Reaction proceeds in two steps: L-aspartate is first activated by ATP to form Asp-AMP and then transferred to the acceptor end of tRNA(Asp/Asn). This Nitrosomonas europaea (strain ATCC 19718 / CIP 103999 / KCTC 2705 / NBRC 14298) protein is Aspartate--tRNA(Asp/Asn) ligase.